Reading from the N-terminus, the 378-residue chain is Probable cytochrome oxidase subunit 2 (378 aa).

Residues 1–8 are Cytoplasmic-facing; the sequence is MIDYEFLR. A helical membrane pass occupies residues 9-28; it reads FIWWVLVIVLLIGFSVTDGF. The Periplasmic portion of the chain corresponds to 29–79; sequence DMGVTALLPVIGKKEVERRIMINTIAPHWDGNQVWLLTAGGAIFAAWPIVY. Residues 80 to 99 traverse the membrane as a helical segment; it reads AVSFSGFYIALVLVLAALFL. The Cytoplasmic segment spans residues 100–122; it reads RPLGFEYRAKIDNPTWRSVWDWG. The helical transmembrane segment at 123–142 threads the bilayer; the sequence is LFAGGFVPALVFGVAFGNLL. The Periplasmic portion of the chain corresponds to 143–164; the sequence is QGVPFHFNELTQVTYTGSFFEL. The chain crosses the membrane as a helical span at residues 165–184; it reads LNPFALLCGVISLSMLVTHG. The Cytoplasmic segment spans residues 185–205; the sequence is ANWLQMKTTEALRDRARTVSQ. A helical transmembrane segment spans residues 206–224; it reads IGSIVTLIAFVLAGVWLYS. Residues 225–261 lie on the Periplasmic side of the membrane; it reads KDGYVVTSTIDHFAPSSPMNKEVAVETGAWFRNFNEM. A helical transmembrane segment spans residues 262-281; sequence PILWIFPALAVVAALLNAAF. Over 282–291 the chain is Cytoplasmic; it reads SKANRCGFAF. Residues 292 to 311 form a helical membrane-spanning segment; the sequence is FFSALTMAGVIITAAVSMFP. The Periplasmic segment spans residues 312-335; it reads FVMPSSSHPEQSLLMWDSTSSELT. The chain crosses the membrane as a helical span at residues 336 to 355; sequence LTLMLIFAVVFVVIALAYTI. The Cytoplasmic segment spans residues 356–378; sequence WSYSKMFGRLDANFIDKNKHSLY.

Belongs to the cytochrome ubiquinol oxidase subunit 2 family. Heterodimer of subunits I and II.

It localises to the cell inner membrane. In terms of biological role, probable cytochrome oxidase subunit. The protein is Probable cytochrome oxidase subunit 2 of Haemophilus influenzae (strain ATCC 51907 / DSM 11121 / KW20 / Rd).